A 782-amino-acid polypeptide reads, in one-letter code: Polyribonucleotide nucleotidyltransferase (782 aa).

Positions 514 and 520 each coordinate Mg(2+). Residues 580 to 639 form the KH domain; that stretch reads PRIITIKIPVDQIGAVIGPKGKIINQIQDDTGAEITIEDDGTIYIGATEGTAAEAARAAI. In terms of domain architecture, S1 motif spans 651–723; the sequence is GERYLGTVVK…ARGKLSLVPV (73 aa). Residues 734-753 show a composition bias toward low complexity; that stretch reads AGAGESAASGGAPRSAGGPQ. The tract at residues 734–782 is disordered; that stretch reads AGAGESAASGGAPRSAGGPQPREHQGPGRPRGRGGDHGGEGRQRTRRRH. Basic and acidic residues predominate over residues 766 to 776; it reads RGGDHGGEGRQ.

The protein belongs to the polyribonucleotide nucleotidyltransferase family. Mg(2+) is required as a cofactor.

Its subcellular location is the cytoplasm. The enzyme catalyses RNA(n+1) + phosphate = RNA(n) + a ribonucleoside 5'-diphosphate. Functionally, involved in mRNA degradation. Catalyzes the phosphorolysis of single-stranded polyribonucleotides processively in the 3'- to 5'-direction. This chain is Polyribonucleotide nucleotidyltransferase, found in Acidothermus cellulolyticus (strain ATCC 43068 / DSM 8971 / 11B).